A 36-amino-acid polypeptide reads, in one-letter code: Photosystem II reaction center protein Psb30 (36 aa).

Residues 8–28 (IIAQLTVVTLTLLAGPVIVFL) traverse the membrane as a helical segment.

This sequence belongs to the Psb30/Ycf12 family. In terms of assembly, PSII is composed of 1 copy each of membrane proteins PsbA, PsbB, PsbC, PsbD, PsbE, PsbF, PsbH, PsbI, PsbJ, PsbK, PsbL, PsbM, PsbT, PsbX, PsbY, PsbZ, Psb30/Ycf12, peripheral proteins of the oxygen-evolving complex and a large number of cofactors. It forms dimeric complexes.

The protein localises to the plastid. It is found in the cyanelle thylakoid membrane. In terms of biological role, a core subunit of photosystem II (PSII), probably helps stabilize the reaction center. This Cyanophora paradoxa protein is Photosystem II reaction center protein Psb30.